A 601-amino-acid polypeptide reads, in one-letter code: UBA domain-containing protein 3 (601 aa).

The region spanning 7–129 is the Arf-GAP domain; the sequence is ETAIRELVQS…LFLDENHSTN (123 aa). Disordered regions lie at residues 123 to 158 and 289 to 310; these read DENH…KSRY and EPNQ…SSMG. Low complexity predominate over residues 139–156; it reads TKSSSQSSPMASTSTSKS. Residues 157–197 enclose the UBA domain; that stretch reads RYADSLSTLHDMGFSDDSVNTHALEETNGDVTRAIEKIVQH.

The polypeptide is UBA domain-containing protein 3 (ucp3) (Schizosaccharomyces pombe (strain 972 / ATCC 24843) (Fission yeast)).